We begin with the raw amino-acid sequence, 491 residues long: mRNA cleavage and polyadenylation factor clp1 (491 aa).

ATP contacts are provided by E28 and K78. The interval 128–160 (RAAAAQAQQQHPTHHQQQQQGRGAGAGVARSKP) is disordered. Low complexity predominate over residues 130 to 148 (AAAQAQQQHPTHHQQQQQG). Residue 171 to 176 (GVGKTS) coordinates ATP.

It belongs to the Clp1 family. Clp1 subfamily. As to quaternary structure, component of a pre-mRNA cleavage factor complex. Interacts directly with PCF11.

The protein resides in the nucleus. Required for endonucleolytic cleavage during polyadenylation-dependent pre-mRNA 3'-end formation. This chain is mRNA cleavage and polyadenylation factor clp1 (paa-7), found in Neurospora crassa (strain ATCC 24698 / 74-OR23-1A / CBS 708.71 / DSM 1257 / FGSC 987).